The chain runs to 241 residues: 2-C-methyl-D-erythritol 4-phosphate cytidylyltransferase (241 aa).

This sequence belongs to the IspD/TarI cytidylyltransferase family. IspD subfamily.

It carries out the reaction 2-C-methyl-D-erythritol 4-phosphate + CTP + H(+) = 4-CDP-2-C-methyl-D-erythritol + diphosphate. It participates in isoprenoid biosynthesis; isopentenyl diphosphate biosynthesis via DXP pathway; isopentenyl diphosphate from 1-deoxy-D-xylulose 5-phosphate: step 2/6. Functionally, catalyzes the formation of 4-diphosphocytidyl-2-C-methyl-D-erythritol from CTP and 2-C-methyl-D-erythritol 4-phosphate (MEP). The polypeptide is 2-C-methyl-D-erythritol 4-phosphate cytidylyltransferase (Shewanella denitrificans (strain OS217 / ATCC BAA-1090 / DSM 15013)).